The primary structure comprises 656 residues: Nexilin (656 aa).

3 disordered regions span residues Met-1 to Asp-131, Arg-165 to Cys-198, and Thr-215 to Glu-284. Residues Leu-11–Leu-26 are compositionally biased toward low complexity. Basic and acidic residues predominate over residues Gly-27 to Leu-78. Ser-80 is subject to Phosphoserine. 3 stretches are compositionally biased toward basic and acidic residues: residues Gly-103–Asp-131, Asn-169–Cys-198, and Glu-216–Val-269. Phosphoserine is present on residues Ser-221, Ser-330, Ser-337, and Ser-345. Position 350 is a phosphothreonine (Thr-350). Disordered regions lie at residues Asn-468 to Asn-492 and Ala-529 to Phe-564. Residues Ser-544 and Ser-549 each carry the phosphoserine modification. Residue Thr-551 is modified to Phosphothreonine. Positions Pro-562–Thr-650 constitute an Ig-like domain.

In terms of assembly, interacts with F-actin. Expressed in brain, testis, spleen and fibroblasts (at protein level). Not detected in liver, kidney or epithelial cells (at protein level).

Its subcellular location is the cytoplasm. The protein localises to the cytoskeleton. It localises to the cell junction. The protein resides in the adherens junction. It is found in the myofibril. Its subcellular location is the sarcomere. The protein localises to the z line. Its function is as follows. Involved in regulating cell migration through association with the actin cytoskeleton. Has an essential role in the maintenance of Z line and sarcomere integrity. In Rattus norvegicus (Rat), this protein is Nexilin.